A 142-amino-acid polypeptide reads, in one-letter code: MAKKVEAYIKLQVAAGMANPSPPVGPALGQHGVNIMEFCKAFNAKTESLEKGLPTPVVITVYNDRSFTFVTKTPPAAVLLKKAAGVKSGSGRPNTEKVGTVTDAQIQEIAETKAADMTGADIEAMKRSIAGTARSMGLVVEG.

The protein belongs to the universal ribosomal protein uL11 family. Part of the ribosomal stalk of the 50S ribosomal subunit. Interacts with L10 and the large rRNA to form the base of the stalk. L10 forms an elongated spine to which L12 dimers bind in a sequential fashion forming a multimeric L10(L12)X complex. One or more lysine residues are methylated.

In terms of biological role, forms part of the ribosomal stalk which helps the ribosome interact with GTP-bound translation factors. This Vibrio campbellii (strain ATCC BAA-1116) protein is Large ribosomal subunit protein uL11.